Reading from the N-terminus, the 282-residue chain is DegV domain-containing protein M6_Spy0690 (282 aa).

The DegV domain occupies 3 to 280; the sequence is LAVITDSTAT…EGAIAFGVTP (278 aa). The hexadecanoate site is built by threonine 61 and serine 94.

Functionally, may bind long-chain fatty acids, such as palmitate, and may play a role in lipid transport or fatty acid metabolism. In Streptococcus pyogenes serotype M6 (strain ATCC BAA-946 / MGAS10394), this protein is DegV domain-containing protein M6_Spy0690.